The following is a 340-amino-acid chain: Phosphoribosylformylglycinamidine cyclo-ligase (340 aa).

This sequence belongs to the AIR synthase family.

The protein localises to the cytoplasm. The catalysed reaction is 2-formamido-N(1)-(5-O-phospho-beta-D-ribosyl)acetamidine + ATP = 5-amino-1-(5-phospho-beta-D-ribosyl)imidazole + ADP + phosphate + H(+). The protein operates within purine metabolism; IMP biosynthesis via de novo pathway; 5-amino-1-(5-phospho-D-ribosyl)imidazole from N(2)-formyl-N(1)-(5-phospho-D-ribosyl)glycinamide: step 2/2. The polypeptide is Phosphoribosylformylglycinamidine cyclo-ligase (Streptococcus pyogenes serotype M3 (strain ATCC BAA-595 / MGAS315)).